The primary structure comprises 168 residues: Gremlin-2 (168 aa).

The signal sequence occupies residues 1–21; the sequence is MFWKLSLSLFLVAVLVKVAEA. Asn40 is a glycosylation site (N-linked (GlcNAc...) asparagine). Cystine bridges form between Cys73–Cys123, Cys87–Cys137, Cys97–Cys155, and Cys101–Cys157. The 91-residue stretch at 73–163 folds into the CTCK domain; sequence CKTQPLRQTV…QCRCMSVNLS (91 aa). N-linked (GlcNAc...) asparagine glycosylation occurs at Asn161.

Belongs to the DAN family. In terms of assembly, homodimer. Interacts with BMP2, BMP4 and BMP7, but has lower affinity for BMP7 than for BMP2 and BMP4. Binds heparin; this impairs the interaction with BMP2. N-glycosylated.

It is found in the secreted. Its function is as follows. Cytokine that inhibits the activity of BMP2 and BMP4 in a dose-dependent manner, and thereby modulates signaling by BMP family members. Contributes to the regulation of embryonic morphogenesis via BMP family members. Antagonizes BMP4-induced suppression of progesterone production in granulosa cells. The sequence is that of Gremlin-2 (GREM2) from Homo sapiens (Human).